The following is a 393-amino-acid chain: NADH-quinone oxidoreductase subunit H 2 (393 aa).

The next 10 helical transmembrane spans lie at 13–33 (VLVT…IVLV), 79–99 (AIFW…FAVI), 112–132 (VGLL…ILGG), 158–178 (LAFA…QGIV), 186–206 (VWGI…YIIA), 240–260 (LYFL…VTLF), 278–298 (LNYG…FTLI), 309–329 (VLLG…IPMV), 333–353 (MIGL…MIWF), and 368–388 (IGWK…AVLG).

This sequence belongs to the complex I subunit 1 family. As to quaternary structure, NDH-1 is composed of 14 different subunits. Subunits NuoA, H, J, K, L, M, N constitute the membrane sector of the complex.

It localises to the cell inner membrane. The enzyme catalyses a quinone + NADH + 5 H(+)(in) = a quinol + NAD(+) + 4 H(+)(out). NDH-1 shuttles electrons from NADH, via FMN and iron-sulfur (Fe-S) centers, to quinones in the respiratory chain. The immediate electron acceptor for the enzyme in this species is believed to be ubiquinone. Couples the redox reaction to proton translocation (for every two electrons transferred, four hydrogen ions are translocated across the cytoplasmic membrane), and thus conserves the redox energy in a proton gradient. This subunit may bind ubiquinone. This chain is NADH-quinone oxidoreductase subunit H 2, found in Solibacter usitatus (strain Ellin6076).